A 676-amino-acid chain; its full sequence is MIRYSGFSVVRSCLSRTFSRNNSALSTAITSSLLTNLFPTCKSCGVRLQSSDPKGPGYYILEESKPAKRFVKSEDQVFAKYVNDLSLEDKKLLINEDSKKVSDSESRSESQDLSNEADIDSSLVNSLGNKDYYASEIKKVSQKDKFKLEEKYNDSVECVRCRDATYRSNFKNFSQQEYPLELLDNIMSRIPPHEQIVYIVNAQDFPMSINPKIFQYRSSNELKFIVNKADLLFKSINLSKNYGQTFFSDYLFHKYRVPKENVMVVSGTNYWDFDKVLDFVDDNSYLIGNVNCGKSTIIKGMLYTIDKSNKRKKFMSSRERTKMEKEQDMLINRASRMKAMTAGEKKKEKKRYEMLFRSKVGPGVSHIPGFTRGFIQIDLEDMDKTIYDVPGFVNSENQLIHHHDIYNKISSPKILKQIHKGVKVYDKGTYTSKYITAKGGQSLTIGGLFFLNFPQKSMYQLRNCINHDFHLFSNFSRAVYISSNLSKYPGMGSKFFIEHDDSSLKELRRFIIPPFHGSIDLVIQNLGHINIKPTGRKETNQPLILYLPPGVEAIIRLPITNYIAKTFTGRDAKGNPLRKENILTKGVLALQRYTAKYPFYSTLISANKGAEVSSELALILKSEATCEPVTDAEQERLVKQDFARIGEWATIARGVECNYNERTVVDERNKFDYWME.

Residues 1 to 48 (MIRYSGFSVVRSCLSRTFSRNNSALSTAITSSLLTNLFPTCKSCGVRL) constitute a mitochondrion transit peptide. Positions 98–110 (SKKVSDSESRSES) are enriched in basic and acidic residues. The segment at 98 to 117 (SKKVSDSESRSESQDLSNEA) is disordered. The CP-type G domain maps to 180–395 (LELLDNIMSR…IYDVPGFVNS (216 aa)).

The protein belongs to the TRAFAC class YlqF/YawG GTPase family. GEP3 subfamily.

The protein localises to the mitochondrion. Functionally, may be involved in the mitochondrial lipid metabolism. The protein is Genetic interactor of prohibitins 3, mitochondrial (GEP3) of Scheffersomyces stipitis (strain ATCC 58785 / CBS 6054 / NBRC 10063 / NRRL Y-11545) (Yeast).